A 281-amino-acid polypeptide reads, in one-letter code: Protoheme IX farnesyltransferase (281 aa).

The next 9 membrane-spanning stretches (helical) occupy residues 16–36 (TFLL…GADF), 38–58 (FVIA…INMW), 75–95 (VPAG…IFAI), 101–121 (FLVS…DIVV), 129–149 (KSPY…LGGW), 150–170 (VAVQ…LLWI), 202–224 (ASWA…YVLL), 228–250 (IFYL…KFAL), and 261–281 (YKLA…GVFL).

Belongs to the UbiA prenyltransferase family. Protoheme IX farnesyltransferase subfamily.

Its subcellular location is the cell membrane. It carries out the reaction heme b + (2E,6E)-farnesyl diphosphate + H2O = Fe(II)-heme o + diphosphate. Its pathway is porphyrin-containing compound metabolism; heme O biosynthesis; heme O from protoheme: step 1/1. Functionally, converts heme B (protoheme IX) to heme O by substitution of the vinyl group on carbon 2 of heme B porphyrin ring with a hydroxyethyl farnesyl side group. In Archaeoglobus fulgidus (strain ATCC 49558 / DSM 4304 / JCM 9628 / NBRC 100126 / VC-16), this protein is Protoheme IX farnesyltransferase.